Consider the following 105-residue polypeptide: Thioredoxin (105 aa).

A Thioredoxin domain is found at 2–103 (VKQIESKSAF…KEKLEATIKG (102 aa)). Position 3 is an N6-acetyllysine (Lys-3). N6-succinyllysine is present on Lys-8. Active-site nucleophile residues include Cys-32 and Cys-35. A disulfide bridge links Cys-32 with Cys-35. Lys-39 carries the N6-acetyllysine modification. 2 positions are modified to S-nitrosocysteine: Cys-62 and Cys-69. Cys-73 bears the S-nitrosocysteine; alternate mark. The residue at position 94 (Lys-94) is an N6-acetyllysine; alternate. Lys-94 carries the N6-succinyllysine; alternate modification.

It belongs to the thioredoxin family. Homodimer; disulfide-linked. Interacts with TXNIP through the redox-active site. Interacts with MAP3K5 and CASP3. Interacts with APEX1; the interaction stimulates the FOS/JUN AP-1 DNA-binding activity in a redox-dependent manner. Post-translationally, in the fully reduced protein, both Cys-69 and Cys-73 are nitrosylated in response to nitric oxide (NO). When two disulfide bonds are present in the protein, only Cys-73 is nitrosylated. Cys-73 can serve as donor for nitrosylation of target proteins.

It is found in the nucleus. It localises to the cytoplasm. The protein localises to the secreted. Its function is as follows. Participates in various redox reactions through the reversible oxidation of its active center dithiol to a disulfide and catalyzes dithiol-disulfide exchange reactions. Plays a role in the reversible S-nitrosylation of cysteine residues in target proteins, and thereby contributes to the response to intracellular nitric oxide. Nitrosylates the active site Cys of CASP3 in response to nitric oxide (NO), and thereby inhibits caspase-3 activity. Induces the FOS/JUN AP-1 DNA binding activity in ionizing radiation (IR) cells through its oxidation/reduction status and stimulates AP-1 transcriptional activity. The sequence is that of Thioredoxin (TXN) from Equus caballus (Horse).